A 90-amino-acid chain; its full sequence is Putative defensin-like protein 64 (90 aa).

The N-terminal stretch at 1–23 (MWGRQIVLKIFFLVLSCVIVIET) is a signal peptide. Disulfide bonds link Cys-33–Cys-56 and Cys-42–Cys-77.

This sequence belongs to the DEFL family.

The protein resides in the secreted. The polypeptide is Putative defensin-like protein 64 (Arabidopsis thaliana (Mouse-ear cress)).